A 902-amino-acid polypeptide reads, in one-letter code: Desmocollin-2 (902 aa).

An N-terminal signal peptide occupies residues 1 to 27 (MAAVGSMRSGSPAFGLGHLLTLAILAL). Positions 28–135 (ASDACKEVVL…TEKVLSRAKR (108 aa)) are excised as a propeptide. 5 consecutive Cadherin domains span residues 136-243 (RWAP…YPIF), 244-355 (TQKL…LPTF), 356-471 (TRTT…GPEC), 472-579 (IPPM…FIPK), and 580-694 (QTVV…RLGP). Topologically, residues 136–694 (RWAPIPCSML…TGYADVRLGP (559 aa)) are extracellular. Residue asparagine 166 is glycosylated (N-linked (GlcNAc...) asparagine). Residues asparagine 392, asparagine 546, and asparagine 629 are each glycosylated (N-linked (GlcNAc...) asparagine). A helical membrane pass occupies residues 695–715 (WAILAILLGIALLFCILFTLV). The Cytoplasmic segment spans residues 716-902 (CSVSRASKQQ…RTLAEVCAKR (187 aa)). 3 positions are modified to phosphoserine: serine 865, serine 869, and serine 874.

In terms of assembly, interacts with DSP, PKP2 and JUP. Interacts with DSG3; the interaction may limit the interaction of DSC3 with p38MAPK family members and therefore repress p38MAPK signaling activation. Expressed in intestinal epithelial cells (at protein level). Expressed in the heart. Expressed in tongue, bladder, stomach, liver, kidney, and lung.

The protein resides in the cell membrane. It is found in the cell junction. Its subcellular location is the desmosome. Its function is as follows. A component of desmosome cell-cell junctions which are required for positive regulation of cellular adhesion. Promotes timely incorporation of DSG2 into desmosome intercellular junctions and promotes interaction of desmosome cell junctions with intermediate filament cytokeratin, via modulation of DSP phosphorylation. Plays an important role in desmosome-mediated maintenance of intestinal epithelial cell intercellular adhesion strength and barrier function. Positively regulates wound healing of intestinal mucosa via promotion of epithelial cell migration, and also plays a role in mechanotransduction of force between intestinal epithelial cells and extracellular matrix. May contribute to epidermal cell positioning (stratification) by mediating differential adhesiveness between cells that express different isoforms. May promote p38MAPK signaling activation that facilitates keratinocyte migration. The sequence is that of Desmocollin-2 (Dsc2) from Mus musculus (Mouse).